A 379-amino-acid polypeptide reads, in one-letter code: tRNA (guanine(26)-N(2))-dimethyltransferase (379 aa).

The segment at 1–26 is disordered; it reads MECREITEGSTTFTAPVQDETTQFPP. A Trm1 methyltransferase domain is found at 4-369; it reads REITEGSTTF…APLPLIEEKI (366 aa). Residues 8–25 are compositionally biased toward polar residues; sequence EGSTTFTAPVQDETTQFP. Positions 41, 66, 82, 108, and 109 each coordinate S-adenosyl-L-methionine. Residues Cys-237, Cys-240, Cys-257, and Cys-260 each coordinate Zn(2+).

Belongs to the class I-like SAM-binding methyltransferase superfamily. Trm1 family.

The enzyme catalyses guanosine(26) in tRNA + 2 S-adenosyl-L-methionine = N(2)-dimethylguanosine(26) in tRNA + 2 S-adenosyl-L-homocysteine + 2 H(+). Functionally, dimethylates a single guanine residue at position 26 of a number of tRNAs using S-adenosyl-L-methionine as donor of the methyl groups. This is tRNA (guanine(26)-N(2))-dimethyltransferase from Methanocorpusculum labreanum (strain ATCC 43576 / DSM 4855 / Z).